The chain runs to 490 residues: Phosphoglucosamine mutase (490 aa).

S139 (phosphoserine intermediate) is an active-site residue. The Mg(2+) site is built by S139, D279, D281, and D283. Position 139 is a phosphoserine (S139).

It belongs to the phosphohexose mutase family. Requires Mg(2+) as cofactor. Activated by phosphorylation.

The enzyme catalyses alpha-D-glucosamine 1-phosphate = D-glucosamine 6-phosphate. Catalyzes the conversion of glucosamine-6-phosphate to glucosamine-1-phosphate. This Trichormus variabilis (strain ATCC 29413 / PCC 7937) (Anabaena variabilis) protein is Phosphoglucosamine mutase.